The chain runs to 927 residues: Nuclear factor of activated T-cells, cytoplasmic 2 (927 aa).

The interval 1–29 (MDVPEPQPDPDGGDGPGHEPGGSPQDELD) is disordered. S23, S53, S54, S56, S99, S107, and S110 each carry phosphoserine. The interval 111-116 (PRIEIT) is calcineurin-binding. Positions 119–201 (HELMQAGGAL…CVSPNNAGPD (83 aa)) are transactivation domain A (TAD-A). 9 positions are modified to phosphoserine: S136, S150, S170, S173, S174, S176, S177, S179, and S182. Residues 163-177 (YREPLCLSPASSGSS) are required for cytoplasmic retention of the phosphorylated form. Tandem repeats lie at residues 186–202 (SPYT…GPDD) and 215–231 (SPRT…LAED). The 3 X approximate SP repeats stretch occupies residues 186–292 (SPYTSPCVSP…PHVALQDDSI (107 aa)). 2 disordered regions span residues 203 to 299 (LCPQ…YPPT) and 322 to 341 (SKIW…PSKA). A phosphoserine mark is found at S215, S219, S223, S238, and S245. Residues 216-226 (PRTSPIMSPRT) show a composition bias toward polar residues. Positions 253 to 255 (KRR) match the Nuclear localization signal motif. Residues S257, S270, S276, S278, S282, S328, and S365 each carry the phosphoserine modification. The segment covering 267–277 (PAASPQRSRSP) has biased composition (low complexity). The 3; approximate repeat unit spans residues 274 to 290 (SRSPSPQPSPHVALQDD). Positions 394-576 (ASLPPLEWPL…NPIECSQRSA (183 aa)) constitute an RHD domain. The DNA-binding element occupies 423–430 (RAHYETEG). Residues S757, S759, and S761 each carry the phosphoserine modification. 2 disordered regions span residues 790–812 (AGSQ…QQAS) and 841–903 (FGPS…QNLD). Positions 798–812 (GSTLPHTSSASQQAS) are enriched in polar residues. S860 carries the phosphoserine modification.

In terms of assembly, member of the multicomponent NFATC transcription complex that consists of at least two components, a pre-existing cytoplasmic component NFATC2 and an inducible nuclear component NFATC1. Other members such as NFATC4, NFATC3 or members of the activating protein-1 family, MAF, GATA4 and Cbp/p300 can also bind the complex. The phosphorylated form specifically interacts with XPO1; which mediates nuclear export. NFATC proteins bind to DNA as monomers. Interacts with NFATC2IP. Interacts with FOXP3. Interacts with TBX21 ('Thr-302' phosphorylated form). Interacts with KAT2A. Interacts with HOMER2 and HOMER3; this interaction competes with calcineurin/PPP3CA-binding and hence prevents NFATC2 dephosphorylation and activation. Interacts with protein phosphatase PPP3CA/calcineurin A. Interacts with AKAP5 (via leucine zipper domain); this is required for NFATC2/NFAT1 recruitment to CRAC channels. In resting cells, phosphorylated by NFATC-kinase on at least 18 sites in the 99-365 region. Upon cell stimulation, all these sites except Ser-245 are dephosphorylated by calcineurin. Dephosphorylation induces a conformational change that simultaneously exposes an NLS and masks an NES, which results in nuclear localization. Simultaneously, one site among Ser-53; Ser-54 and Ser-56 is phosphorylated; which is required for full transcriptional activity. Post-translationally, ubiquitinated in endothelial cells by RNF213 downstream of the non-canonical Wnt signaling pathway, leading to its degradation by the proteasome. Expressed in spleen, heart, testis, brain, placenta, muscle and pancreas. Expressed in the thymus. Expressed in the lung. Expressed in cartilage.

It localises to the cytoplasm. The protein resides in the nucleus. Plays a role in the inducible expression of cytokine genes in T cells, especially in the induction of the IL-2, IL-3, IL-4, TNF-alpha or GM-CSF. Promotes invasive migration through the activation of GPC6 expression and WNT5A signaling pathway. Is involved in the negative regulation of chondrogenesis. Recruited by AKAP5 to ORAI1 pore-forming subunit of CRAC channels in Ca(2+) signaling microdomains where store-operated Ca(2+) influx is coupled to calmodulin and calcineurin signaling and activation of NFAT-dependent transcriptional responses. This is Nuclear factor of activated T-cells, cytoplasmic 2 (Nfatc2) from Mus musculus (Mouse).